The following is a 177-amino-acid chain: Large ribosomal subunit protein uL6 (177 aa).

Residues 155 to 177 are disordered; the sequence is EPYKGKGVKHADERIFRKEGKKK.

The protein belongs to the universal ribosomal protein uL6 family. In terms of assembly, part of the 50S ribosomal subunit.

Its function is as follows. This protein binds to the 23S rRNA, and is important in its secondary structure. It is located near the subunit interface in the base of the L7/L12 stalk, and near the tRNA binding site of the peptidyltransferase center. The chain is Large ribosomal subunit protein uL6 from Bartonella tribocorum (strain CIP 105476 / IBS 506).